Reading from the N-terminus, the 236-residue chain is MIEQQQFGQSRICYDSEWVSSPELALFDPQYWQAQNKVVGSATGRGTTWFVQLPKITAALRHYRRGGLFGKLVKDHYWFRSWSATRSFAEFHLLKQLREAGVNVPRPIAAYAMRKGLFYQADLLSERIANAQDLVTILQKHSLNAELYQKIGVEIAKMHRVGVNHTDLNIHNILIDAQETIWIIDFDKCYPQAGDGWKQENLDRLKRSFNKERVKRSIHWHDKDFQALLTGYESQQ.

D167 is an active-site residue.

Belongs to the protein kinase superfamily. KdkA/RfaP family.

It is found in the cell inner membrane. The catalysed reaction is an alpha-Kdo-(2-&gt;6)-lipid IVA + ATP = a 4-O-phospho-alpha-Kdo-(2-&gt;6)-lipid IVA + ADP + H(+). The protein operates within bacterial outer membrane biogenesis; LPS core biosynthesis. Its function is as follows. Catalyzes the ATP-dependent phosphorylation of the 3-deoxy-D-manno-octulosonic acid (Kdo) residue in Kdo-lipid IV(A) at the 4-OH position. The sequence is that of 3-deoxy-D-manno-octulosonic acid kinase from Vibrio vulnificus (strain YJ016).